A 626-amino-acid polypeptide reads, in one-letter code: Polyphenol oxidase C, chloroplastic (626 aa).

The N-terminal 83 residues, 1–83 (MASLCSNSST…ANAIPLAASA (83 aa)), are a transit peptide targeting the chloroplast. 2 disulfides stabilise this stretch: Cys94-Cys110 and Cys109-Cys177. Cu cation contacts are provided by His176, His194, His203, His324, His328, and His366. The 2'-(S-cysteinyl)-histidine (Cys-His) cross-link spans 180–194 (CNGGYSIDGKVLQVH).

This sequence belongs to the tyrosinase family. Cu(2+) is required as a cofactor.

The protein localises to the plastid. It is found in the chloroplast thylakoid lumen. The catalysed reaction is 2 catechol + O2 = 2 1,2-benzoquinone + 2 H2O. In terms of biological role, catalyzes the oxidation of mono- and o-diphenols to o-diquinones. This Solanum lycopersicum (Tomato) protein is Polyphenol oxidase C, chloroplastic.